The chain runs to 197 residues: 7-methyl-GTP pyrophosphatase (197 aa).

Catalysis depends on Asp-79, which acts as the Proton acceptor.

The protein belongs to the Maf family. YceF subfamily.

Its subcellular location is the cytoplasm. It carries out the reaction N(7)-methyl-GTP + H2O = N(7)-methyl-GMP + diphosphate + H(+). Its function is as follows. Nucleoside triphosphate pyrophosphatase that hydrolyzes 7-methyl-GTP (m(7)GTP). May have a dual role in cell division arrest and in preventing the incorporation of modified nucleotides into cellular nucleic acids. The chain is 7-methyl-GTP pyrophosphatase from Dictyostelium discoideum (Social amoeba).